Reading from the N-terminus, the 191-residue chain is Probable GTP-binding protein EngB (191 aa).

Positions Asn-19–Glu-188 constitute an EngB-type G domain. GTP contacts are provided by residues Gly-27–Ser-34, Gly-53–Leu-57, Asp-70–Gly-73, Asn-136–Asp-139, and Ala-167–Thr-169. Mg(2+) contacts are provided by Ser-34 and Thr-55.

It belongs to the TRAFAC class TrmE-Era-EngA-EngB-Septin-like GTPase superfamily. EngB GTPase family. It depends on Mg(2+) as a cofactor.

In terms of biological role, necessary for normal cell division and for the maintenance of normal septation. This chain is Probable GTP-binding protein EngB, found in Mycoplasma genitalium (strain ATCC 33530 / DSM 19775 / NCTC 10195 / G37) (Mycoplasmoides genitalium).